We begin with the raw amino-acid sequence, 136 residues long: MLAPKKQKFRKAHKGRVASKAKAGTTLAFGSFGLKSIDGWRVTARQIEAGRKAATRCMKRQGRLWIRIFPDVPVSQKPAEVRMGKGKGSPEFFAVRVSPGRIMFEIEGVEENVALRALELASAKLPVRTRIVRRYE.

The protein belongs to the universal ribosomal protein uL16 family. Part of the 50S ribosomal subunit.

In terms of biological role, binds 23S rRNA and is also seen to make contacts with the A and possibly P site tRNAs. This Rickettsia massiliae (strain Mtu5) protein is Large ribosomal subunit protein uL16.